The sequence spans 435 residues: Glutamyl-tRNA reductase (435 aa).

Substrate-binding positions include 49–52 (TCNR), Ser109, 114–116 (ETQ), and Gln120. The active-site Nucleophile is the Cys50. 189–194 (GAGEMS) lines the NADP(+) pocket.

This sequence belongs to the glutamyl-tRNA reductase family. As to quaternary structure, homodimer.

It carries out the reaction (S)-4-amino-5-oxopentanoate + tRNA(Glu) + NADP(+) = L-glutamyl-tRNA(Glu) + NADPH + H(+). Its pathway is porphyrin-containing compound metabolism; protoporphyrin-IX biosynthesis; 5-aminolevulinate from L-glutamyl-tRNA(Glu): step 1/2. Functionally, catalyzes the NADPH-dependent reduction of glutamyl-tRNA(Glu) to glutamate 1-semialdehyde (GSA). The polypeptide is Glutamyl-tRNA reductase (Listeria innocua serovar 6a (strain ATCC BAA-680 / CLIP 11262)).